A 583-amino-acid polypeptide reads, in one-letter code: Aspartate--tRNA ligase (583 aa).

Position 169 (glutamate 169) interacts with L-aspartate. An aspartate region spans residues glutamine 193–lysine 196. Arginine 215 is a binding site for L-aspartate. Residues arginine 215–glutamate 217 and glutamine 224 contribute to the ATP site. Residue histidine 443 participates in L-aspartate binding. Glutamate 477 contributes to the ATP binding site. An L-aspartate-binding site is contributed by arginine 484. An ATP-binding site is contributed by glycine 529–arginine 532.

Belongs to the class-II aminoacyl-tRNA synthetase family. Type 1 subfamily. As to quaternary structure, homodimer.

It localises to the cytoplasm. The enzyme catalyses tRNA(Asp) + L-aspartate + ATP = L-aspartyl-tRNA(Asp) + AMP + diphosphate. Its function is as follows. Catalyzes the attachment of L-aspartate to tRNA(Asp) in a two-step reaction: L-aspartate is first activated by ATP to form Asp-AMP and then transferred to the acceptor end of tRNA(Asp). This chain is Aspartate--tRNA ligase, found in Stenotrophomonas maltophilia (strain R551-3).